The following is a 60-amino-acid chain: Large ribosomal subunit protein uL30 (60 aa).

It belongs to the universal ribosomal protein uL30 family. In terms of assembly, part of the 50S ribosomal subunit.

This is Large ribosomal subunit protein uL30 from Dechloromonas aromatica (strain RCB).